Here is a 172-residue protein sequence, read N- to C-terminus: S-ribosylhomocysteine lyase (172 aa).

The Fe cation site is built by H54, H58, and C128.

Belongs to the LuxS family. In terms of assembly, homodimer. It depends on Fe cation as a cofactor.

It catalyses the reaction S-(5-deoxy-D-ribos-5-yl)-L-homocysteine = (S)-4,5-dihydroxypentane-2,3-dione + L-homocysteine. In terms of biological role, involved in the synthesis of autoinducer 2 (AI-2) which is secreted by bacteria and is used to communicate both the cell density and the metabolic potential of the environment. The regulation of gene expression in response to changes in cell density is called quorum sensing. Catalyzes the transformation of S-ribosylhomocysteine (RHC) to homocysteine (HC) and 4,5-dihydroxy-2,3-pentadione (DPD). In Vibrio parahaemolyticus serotype O3:K6 (strain RIMD 2210633), this protein is S-ribosylhomocysteine lyase.